The primary structure comprises 474 residues: Amidophosphoribosyltransferase (474 aa).

The propeptide occupies 1–10 (MLGESEVRDK). The Nucleophile role is filled by cysteine 11. The region spanning 11-234 (CGIVGIYSQD…PGEILHLNRG (224 aa)) is the Glutamine amidotransferase type-2 domain. Cysteine 250 contacts [4Fe-4S] cluster. Mg(2+) is bound by residues serine 297, aspartate 359, and aspartate 360. Cysteine 396, cysteine 447, and cysteine 450 together coordinate [4Fe-4S] cluster.

The protein in the C-terminal section; belongs to the purine/pyrimidine phosphoribosyltransferase family. Requires Mg(2+) as cofactor. The cofactor is [4Fe-4S] cluster.

The catalysed reaction is 5-phospho-beta-D-ribosylamine + L-glutamate + diphosphate = 5-phospho-alpha-D-ribose 1-diphosphate + L-glutamine + H2O. Its pathway is purine metabolism; IMP biosynthesis via de novo pathway; N(1)-(5-phospho-D-ribosyl)glycinamide from 5-phospho-alpha-D-ribose 1-diphosphate: step 1/2. In terms of biological role, catalyzes the formation of phosphoribosylamine from phosphoribosylpyrophosphate (PRPP) and glutamine. This chain is Amidophosphoribosyltransferase, found in Methanothermobacter thermautotrophicus (strain ATCC 29096 / DSM 1053 / JCM 10044 / NBRC 100330 / Delta H) (Methanobacterium thermoautotrophicum).